The chain runs to 392 residues: Phosphoglycerate kinase (392 aa).

Substrate-binding positions include aspartate 21–asparagine 23, arginine 36, histidine 59–arginine 62, arginine 117, and arginine 150. Residues lysine 200, glycine 288, glutamate 319, and glycine 345 to serine 348 contribute to the ATP site.

Belongs to the phosphoglycerate kinase family. Monomer.

The protein localises to the cytoplasm. The enzyme catalyses (2R)-3-phosphoglycerate + ATP = (2R)-3-phospho-glyceroyl phosphate + ADP. It functions in the pathway carbohydrate degradation; glycolysis; pyruvate from D-glyceraldehyde 3-phosphate: step 2/5. In Rubrobacter xylanophilus (strain DSM 9941 / JCM 11954 / NBRC 16129 / PRD-1), this protein is Phosphoglycerate kinase.